The sequence spans 394 residues: Argininosuccinate synthase (394 aa).

ATP is bound by residues 7 to 15 (AYSGGLDTS) and alanine 34. The L-citrulline site is built by tyrosine 85 and serine 90. Glycine 115 lines the ATP pocket. Residues threonine 117, asparagine 121, and aspartate 122 each coordinate L-aspartate. Asparagine 121 is a binding site for L-citrulline. L-citrulline is bound by residues arginine 125, serine 176, serine 185, glutamate 261, and tyrosine 273.

It belongs to the argininosuccinate synthase family. Type 1 subfamily. Homotetramer.

The protein localises to the cytoplasm. It carries out the reaction L-citrulline + L-aspartate + ATP = 2-(N(omega)-L-arginino)succinate + AMP + diphosphate + H(+). It participates in amino-acid biosynthesis; L-arginine biosynthesis; L-arginine from L-ornithine and carbamoyl phosphate: step 2/3. This is Argininosuccinate synthase from Ehrlichia ruminantium (strain Gardel).